The sequence spans 910 residues: Inactive disease susceptibility protein LOV1 (910 aa).

Positions 22–60 form a coiled coil; it reads ARLNGIGEQVDGLKRQLGRLQSLLKDADAKKHESERVRN. The region spanning 169 to 461 is the NB-ARC domain; it reads EQSVEALAGH…AAEGIITSSD (293 aa). LRR repeat units follow at residues 584–609, 610–632, and 634–655; these read LPLLRVLDLSRVKFEGGKLPSSIGDL, IHLRFLSLHRAWISHLPSSLRNL, and LLLYLNLGFNGMVHVPNVLKEM.

This sequence belongs to the disease resistance NB-LRR family. RPP8/HRT subfamily.

The polypeptide is Inactive disease susceptibility protein LOV1 (LOV1) (Arabidopsis thaliana (Mouse-ear cress)).